Consider the following 488-residue polypeptide: Glutamyl-tRNA(Gln) amidotransferase subunit A (488 aa).

Catalysis depends on charge relay system residues lysine 77 and serine 152. Serine 176 functions as the Acyl-ester intermediate in the catalytic mechanism.

Belongs to the amidase family. GatA subfamily. In terms of assembly, heterotrimer of A, B and C subunits.

The enzyme catalyses L-glutamyl-tRNA(Gln) + L-glutamine + ATP + H2O = L-glutaminyl-tRNA(Gln) + L-glutamate + ADP + phosphate + H(+). In terms of biological role, allows the formation of correctly charged Gln-tRNA(Gln) through the transamidation of misacylated Glu-tRNA(Gln) in organisms which lack glutaminyl-tRNA synthetase. The reaction takes place in the presence of glutamine and ATP through an activated gamma-phospho-Glu-tRNA(Gln). In Streptococcus agalactiae serotype III (strain NEM316), this protein is Glutamyl-tRNA(Gln) amidotransferase subunit A.